We begin with the raw amino-acid sequence, 662 residues long: DNA ligase (662 aa).

NAD(+)-binding positions include 34–38, 83–84, and Glu-113; these read DYDYD and SI. Lys-115 serves as the catalytic N6-AMP-lysine intermediate. NAD(+)-binding residues include Arg-136, Glu-172, Lys-286, and Lys-310. Residues Cys-404, Cys-407, Cys-422, and Cys-427 each coordinate Zn(2+). A BRCT domain is found at 583-662; the sequence is RESSSCLGKT…NDLLKILYPN (80 aa).

It belongs to the NAD-dependent DNA ligase family. LigA subfamily. Requires Mg(2+) as cofactor. The cofactor is Mn(2+).

It carries out the reaction NAD(+) + (deoxyribonucleotide)n-3'-hydroxyl + 5'-phospho-(deoxyribonucleotide)m = (deoxyribonucleotide)n+m + AMP + beta-nicotinamide D-nucleotide.. Functionally, DNA ligase that catalyzes the formation of phosphodiester linkages between 5'-phosphoryl and 3'-hydroxyl groups in double-stranded DNA using NAD as a coenzyme and as the energy source for the reaction. It is essential for DNA replication and repair of damaged DNA. The sequence is that of DNA ligase from Chlamydia caviae (strain ATCC VR-813 / DSM 19441 / 03DC25 / GPIC) (Chlamydophila caviae).